The sequence spans 65 residues: UPF0434 protein PSHAa1659 (65 aa).

Belongs to the UPF0434 family.

This Pseudoalteromonas translucida (strain TAC 125) protein is UPF0434 protein PSHAa1659.